We begin with the raw amino-acid sequence, 634 residues long: 1-deoxy-D-xylulose-5-phosphate synthase (634 aa).

Thiamine diphosphate-binding positions include histidine 73 and 114-116 (GHS). Aspartate 145 contributes to the Mg(2+) binding site. Thiamine diphosphate contacts are provided by residues 146–147 (GA), asparagine 174, tyrosine 285, and glutamate 365. Asparagine 174 lines the Mg(2+) pocket.

The protein belongs to the transketolase family. DXPS subfamily. Homodimer. Requires Mg(2+) as cofactor. The cofactor is thiamine diphosphate.

The catalysed reaction is D-glyceraldehyde 3-phosphate + pyruvate + H(+) = 1-deoxy-D-xylulose 5-phosphate + CO2. It functions in the pathway metabolic intermediate biosynthesis; 1-deoxy-D-xylulose 5-phosphate biosynthesis; 1-deoxy-D-xylulose 5-phosphate from D-glyceraldehyde 3-phosphate and pyruvate: step 1/1. Catalyzes the acyloin condensation reaction between C atoms 2 and 3 of pyruvate and glyceraldehyde 3-phosphate to yield 1-deoxy-D-xylulose-5-phosphate (DXP). The polypeptide is 1-deoxy-D-xylulose-5-phosphate synthase (Desulforudis audaxviator (strain MP104C)).